The sequence spans 463 residues: Probable multidrug resistance protein YoeA (463 aa).

Helical transmembrane passes span 24–44 (LFLV…LVGM), 56–76 (VAAV…TIGI), 106–126 (FTFL…LDIL), 143–163 (ARIL…TTFL), 177–197 (IVST…MFGF), 202–222 (IYGS…VLMV), 256–276 (VPAS…ISFV), 293–313 (VASY…IFAA), 330–350 (VGIW…YVFS), 370–390 (LLMI…ISAT), 397–417 (VLWP…PVAF), and 427–447 (ILGV…LIYG).

The protein belongs to the multi antimicrobial extrusion (MATE) (TC 2.A.66.1) family.

It is found in the cell membrane. This is Probable multidrug resistance protein YoeA (yoeA) from Bacillus subtilis (strain 168).